We begin with the raw amino-acid sequence, 146 residues long: Hemoglobin cathodic subunit beta (146 aa).

The Globin domain occupies 2-146 (QWSSSERSVI…VVSGLSKQYF (145 aa)). Heme b is bound at residue His-63.

As to quaternary structure, heterotetramer of two alpha and two beta chains. In terms of tissue distribution, red blood cells.

Its function is as follows. Involved in oxygen transport from the gills to various peripheral tissues. In Ophisurus serpens (Serpent eel), this protein is Hemoglobin cathodic subunit beta.